Consider the following 348-residue polypeptide: Ninja-family protein AFP2 (348 aa).

The segment at 186 to 272 (DSDGGGATGG…VDRKGKGMAT (87 aa)) is disordered. A compositionally biased stretch (gly residues) spans 187-197 (SDGGGATGGGS). Polar residues-rich tracts occupy residues 207–216 (KNQQGSSNSC) and 228–244 (CSSNSGSQGTERPSVTR). The span at 247–267 (KVNENENEKRVRSEDSVDRKG) shows a compositional bias: basic and acidic residues.

This sequence belongs to the Ninja family. As to quaternary structure, forms a homodimer and heterodimer with AFP1 and AFP3. Interacts with ABI5/DPBF1, DPBF2, AREB3/DPBF3, EEL/DPBF4, ABF1, ABF3/DPBF5 and ABF4/AREB2.

It localises to the nucleus. Acts as a negative regulator of abscisic acid (ABA) response during germination through the ubiquitin-mediated proteolysis of ABI5/DPBF1. The protein is Ninja-family protein AFP2 (AFP2) of Arabidopsis thaliana (Mouse-ear cress).